The following is a 256-amino-acid chain: Chorismate mutase (256 aa).

The Chorismate mutase domain maps to 3-255; sequence FTKPETVLNL…EVEYLLRRLE (253 aa). 2 residues coordinate L-tyrosine: Arg-75 and Arg-76. Asn-138, Asn-139, Gly-141, and Ser-142 together coordinate L-tryptophan. L-tyrosine-binding residues include Asn-139, Gly-141, Ser-142, and Thr-145.

Homodimer.

Its subcellular location is the cytoplasm. It catalyses the reaction chorismate = prephenate. Its pathway is metabolic intermediate biosynthesis; prephenate biosynthesis; prephenate from chorismate: step 1/1. With respect to regulation, each dimer has two allosteric binding sites that can bind the regulatory effectors tryptophan or tyrosine. Can bind either one tryptophan or one tyrosine, two tryptophan or two tyrosine or one tryptophan and one tyrosine, which differentially affect the catalytic activity. Activated by tryptophan and subject to feedback inhibition by tyrosine. In the presence of both tryptophan and tyrosine, the enzyme is in the activated state. Its function is as follows. Catalyzes the Claisen rearrangement of chorismate to prephenate. Acts at the first branch point in the aromatic amino acid pathway where it steers biosynthesis towards phenylalanine and tyrosine, and away from tryptophan. The chain is Chorismate mutase from Saccharomyces cerevisiae (strain ATCC 204508 / S288c) (Baker's yeast).